The chain runs to 425 residues: Queuine tRNA-ribosyltransferase accessory subunit 2 (425 aa).

The segment at 302-323 (QNGAQDLEKNSPEEDQEEEVVK) is disordered. Zn(2+) is bound by residues Cys-351, Cys-353, Cys-356, and His-382.

This sequence belongs to the queuine tRNA-ribosyltransferase family. QTRT2 subfamily. As to quaternary structure, heterodimer of a catalytic subunit QTRT1 and an accessory subunit QTRT2. Zn(2+) serves as cofactor.

It is found in the cytoplasm. It localises to the mitochondrion outer membrane. Functionally, non-catalytic subunit of the queuine tRNA-ribosyltransferase (TGT) that catalyzes the base-exchange of a guanine (G) residue with queuine (Q) at position 34 (anticodon wobble position) in tRNAs with GU(N) anticodons (tRNA-Asp, -Asn, -His and -Tyr), resulting in the hypermodified nucleoside queuosine (7-(((4,5-cis-dihydroxy-2-cyclopenten-1-yl)amino)methyl)-7-deazaguanosine). The chain is Queuine tRNA-ribosyltransferase accessory subunit 2 from Gallus gallus (Chicken).